Reading from the N-terminus, the 344-residue chain is MPQAYENAGVSVEAGYEVVKRIKSHVARTNRPGVVSGIGGFGGLFDLASLGYNEPVLISGTDGVGTKLVIAKLMDKHDTIGIDCVAMCVNDVVAQGAQPLFFLDYIACGKNDPAVLEQVVSGVADGCVQAGAALIGGETAEMPGMYDEDEYDLAGFTVGCVERSKIVDGSTIEAGDVLIGLPSTGVHSNGFSLVRKALFEQAGYTVHTRLPELDDRELGDVLLTPTKIYVKALMPLFEANLVRGVAHITGGGFIENVPRMLPEGLAASIELGSWPVPPIFDVIEKAGDVDHMEMYNIFNMGLGMVVAIRPDRVDEAMNLLEHAGEKAYRVGHVIEQVNERVDLA.

This sequence belongs to the AIR synthase family.

The protein resides in the cytoplasm. It catalyses the reaction 2-formamido-N(1)-(5-O-phospho-beta-D-ribosyl)acetamidine + ATP = 5-amino-1-(5-phospho-beta-D-ribosyl)imidazole + ADP + phosphate + H(+). It functions in the pathway purine metabolism; IMP biosynthesis via de novo pathway; 5-amino-1-(5-phospho-D-ribosyl)imidazole from N(2)-formyl-N(1)-(5-phospho-D-ribosyl)glycinamide: step 2/2. The protein is Phosphoribosylformylglycinamidine cyclo-ligase of Bifidobacterium animalis subsp. lactis (strain AD011).